We begin with the raw amino-acid sequence, 333 residues long: Glyceraldehyde-3-phosphate dehydrogenase (333 aa).

Residue S1 is modified to N-acetylserine. Residues 10 to 11, D31, and S118 contribute to the NAD(+) site; that span reads RI. Residues 147 to 149, T178, 207 to 208, and R230 each bind D-glyceraldehyde 3-phosphate; these read SCT and TG. C148 functions as the Nucleophile in the catalytic mechanism. Residue N312 participates in NAD(+) binding.

Belongs to the glyceraldehyde-3-phosphate dehydrogenase family. Homotetramer.

It localises to the cytoplasm. It catalyses the reaction D-glyceraldehyde 3-phosphate + phosphate + NAD(+) = (2R)-3-phospho-glyceroyl phosphate + NADH + H(+). The protein operates within carbohydrate degradation; glycolysis; pyruvate from D-glyceraldehyde 3-phosphate: step 1/5. This chain is Glyceraldehyde-3-phosphate dehydrogenase, found in Homarus americanus (American lobster).